We begin with the raw amino-acid sequence, 31 residues long: Photosystem II reaction center protein T (31 aa).

Residues A3 to F23 traverse the membrane as a helical segment.

It belongs to the PsbT family. In terms of assembly, PSII is composed of 1 copy each of membrane proteins PsbA, PsbB, PsbC, PsbD, PsbE, PsbF, PsbH, PsbI, PsbJ, PsbK, PsbL, PsbM, PsbT, PsbX, PsbY, Psb30/Ycf12, peripheral proteins PsbO, CyanoQ (PsbQ), PsbU, PsbV and a large number of cofactors. It forms dimeric complexes.

The protein localises to the cellular thylakoid membrane. In terms of biological role, found at the monomer-monomer interface of the photosystem II (PS II) dimer, plays a role in assembly and dimerization of PSII. PSII is a light-driven water plastoquinone oxidoreductase, using light energy to abstract electrons from H(2)O, generating a proton gradient subsequently used for ATP formation. The protein is Photosystem II reaction center protein T of Prochlorococcus marinus (strain SARG / CCMP1375 / SS120).